The primary structure comprises 298 residues: Inosose dehydratase (298 aa).

The protein belongs to the IolE/MocC family. Glutathione is required as a cofactor. Co(2+) serves as cofactor. Requires Mn(2+) as cofactor.

It catalyses the reaction scyllo-inosose = 3D-3,5/4-trihydroxycyclohexane-1,2-dione + H2O. Its pathway is polyol metabolism; myo-inositol degradation into acetyl-CoA; acetyl-CoA from myo-inositol: step 2/7. Catalyzes the dehydration of inosose (2-keto-myo-inositol, 2KMI or 2,4,6/3,5-pentahydroxycyclohexanone) to 3D-(3,5/4)-trihydroxycyclohexane-1,2-dione (D-2,3-diketo-4-deoxy-epi-inositol). This chain is Inosose dehydratase, found in Clostridium beijerinckii (strain ATCC 51743 / NCIMB 8052) (Clostridium acetobutylicum).